The following is a 254-amino-acid chain: UPF0246 protein FTW_0267 (254 aa).

Belongs to the UPF0246 family.

The chain is UPF0246 protein FTW_0267 from Francisella tularensis subsp. tularensis (strain WY96-3418).